Consider the following 427-residue polypeptide: N-acylglucosamine 2-epimerase (427 aa).

The segment at 195–216 (LLNLVEQLGEADEELAGKYAEL) is leucine-zipper.

Belongs to the N-acylglucosamine 2-epimerase family. As to quaternary structure, homodimer. Forms a heterodimer with renin and inhibits its activity.

It catalyses the reaction an N-acyl-D-glucosamine = an N-acyl-D-mannosamine. Its pathway is amino-sugar metabolism; N-acetylneuraminate degradation. Its activity is regulated as follows. Inhibited by N-ethylmaleimide, 5,5'-dithiobis-2-nitrobenzoate and iodoacetic acid. Catalyzes the interconversion of N-acetylglucosamine to N-acetylmannosamine. Involved in the N-glycolylneuraminic acid (Neu5Gc) degradation pathway: although human is not able to catalyze formation of Neu5Gc due to the inactive CMAHP enzyme, Neu5Gc is present in food and must be degraded. The polypeptide is N-acylglucosamine 2-epimerase (RENBP) (Homo sapiens (Human)).